The sequence spans 203 residues: Urease accessory protein UreG (203 aa).

14–21 provides a ligand contact to GTP; it reads GPVGSGKT.

The protein belongs to the SIMIBI class G3E GTPase family. UreG subfamily. Homodimer. UreD, UreF and UreG form a complex that acts as a GTP-hydrolysis-dependent molecular chaperone, activating the urease apoprotein by helping to assemble the nickel containing metallocenter of UreC. The UreE protein probably delivers the nickel.

It localises to the cytoplasm. Facilitates the functional incorporation of the urease nickel metallocenter. This process requires GTP hydrolysis, probably effectuated by UreG. The polypeptide is Urease accessory protein UreG (Rhizobium meliloti (strain 1021) (Ensifer meliloti)).